The primary structure comprises 485 residues: GTPase Der (485 aa).

2 EngA-type G domains span residues 3–167 (PTIA…PEPE) and 176–349 (PVFA…NAAM). GTP is bound by residues 9–16 (GRPNVGKS), 56–60 (DTGGF), 119–122 (NKGE), 182–189 (GRPNVGKS), 229–233 (DTAGV), and 294–297 (NKWD). The 85-residue stretch at 350–434 (IKMPTPKITR…PLRIQYNVSE (85 aa)) folds into the KH-like domain. The disordered stretch occupies residues 435–485 (NPYENAEDKPKKKPLRRVSLSNRIEKREGRKEEKNRFKKKTKVSVKKQFSK). Residues 457–469 (RIEKREGRKEEKN) are compositionally biased toward basic and acidic residues. A compositionally biased stretch (basic residues) spans 470-485 (RFKKKTKVSVKKQFSK).

It belongs to the TRAFAC class TrmE-Era-EngA-EngB-Septin-like GTPase superfamily. EngA (Der) GTPase family. As to quaternary structure, associates with the 50S ribosomal subunit.

GTPase that plays an essential role in the late steps of ribosome biogenesis. This Neisseria meningitidis serogroup B (strain ATCC BAA-335 / MC58) protein is GTPase Der.